Reading from the N-terminus, the 138-residue chain is Basic phospholipase A2 PL-Y (138 aa).

Positions 1 to 16 (MRTLWIMAVLLVGVEG) are cleaved as a signal peptide. 7 disulfide bridges follow: cysteine 42-cysteine 131, cysteine 44-cysteine 60, cysteine 59-cysteine 111, cysteine 65-cysteine 138, cysteine 66-cysteine 104, cysteine 73-cysteine 97, and cysteine 91-cysteine 102. Ca(2+)-binding residues include tyrosine 43, glycine 45, and glycine 47. The active site involves histidine 63. Aspartate 64 lines the Ca(2+) pocket. Residue aspartate 105 is part of the active site.

This sequence belongs to the phospholipase A2 family. Group II subfamily. D49 sub-subfamily. Requires Ca(2+) as cofactor. As to expression, expressed by the venom gland.

The protein resides in the secreted. The catalysed reaction is a 1,2-diacyl-sn-glycero-3-phosphocholine + H2O = a 1-acyl-sn-glycero-3-phosphocholine + a fatty acid + H(+). Functionally, snake venom phospholipase A2 (PLA2) that can cleave arachidonate at the sn-2 position from phospholipides in the micellar state or in bilayer membranes. PLA2 catalyzes the calcium-dependent hydrolysis of the 2-acyl groups in 3-sn-phosphoglycerides. In Protobothrops flavoviridis (Habu), this protein is Basic phospholipase A2 PL-Y.